The chain runs to 379 residues: UDP-4-amino-4-deoxy-L-arabinose--oxoglutarate aminotransferase (379 aa).

N6-(pyridoxal phosphate)lysine is present on lysine 182.

It belongs to the DegT/DnrJ/EryC1 family. ArnB subfamily. Homodimer. It depends on pyridoxal 5'-phosphate as a cofactor.

The catalysed reaction is UDP-4-amino-4-deoxy-beta-L-arabinose + 2-oxoglutarate = UDP-beta-L-threo-pentopyranos-4-ulose + L-glutamate. It functions in the pathway nucleotide-sugar biosynthesis; UDP-4-deoxy-4-formamido-beta-L-arabinose biosynthesis; UDP-4-deoxy-4-formamido-beta-L-arabinose from UDP-alpha-D-glucuronate: step 2/3. It participates in bacterial outer membrane biogenesis; lipopolysaccharide biosynthesis. Functionally, catalyzes the conversion of UDP-4-keto-arabinose (UDP-Ara4O) to UDP-4-amino-4-deoxy-L-arabinose (UDP-L-Ara4N). The modified arabinose is attached to lipid A and is required for resistance to polymyxin and cationic antimicrobial peptides. This is UDP-4-amino-4-deoxy-L-arabinose--oxoglutarate aminotransferase from Escherichia coli O8 (strain IAI1).